A 258-amino-acid polypeptide reads, in one-letter code: Imidazole glycerol phosphate synthase subunit HisF (258 aa).

Catalysis depends on residues D11 and D130.

This sequence belongs to the HisA/HisF family. In terms of assembly, heterodimer of HisH and HisF.

The protein localises to the cytoplasm. The enzyme catalyses 5-[(5-phospho-1-deoxy-D-ribulos-1-ylimino)methylamino]-1-(5-phospho-beta-D-ribosyl)imidazole-4-carboxamide + L-glutamine = D-erythro-1-(imidazol-4-yl)glycerol 3-phosphate + 5-amino-1-(5-phospho-beta-D-ribosyl)imidazole-4-carboxamide + L-glutamate + H(+). It functions in the pathway amino-acid biosynthesis; L-histidine biosynthesis; L-histidine from 5-phospho-alpha-D-ribose 1-diphosphate: step 5/9. IGPS catalyzes the conversion of PRFAR and glutamine to IGP, AICAR and glutamate. The HisF subunit catalyzes the cyclization activity that produces IGP and AICAR from PRFAR using the ammonia provided by the HisH subunit. This is Imidazole glycerol phosphate synthase subunit HisF from Pectobacterium carotovorum subsp. carotovorum (strain PC1).